Reading from the N-terminus, the 436-residue chain is T-box transcription factor TBX6 (436 aa).

Residues Leu100–Glu273 constitute a DNA-binding region (T-box). The span at Phe271 to Ala284 shows a compositional bias: basic and acidic residues. Disordered stretches follow at residues Phe271–Pro339 and Pro360–Ser379. Residues Glu325 to Pro339 are compositionally biased toward low complexity.

As to quaternary structure, forms a dimeric complex with DNA (in vitro). As to expression, expressed in fetal tail bud, posterior spinal tissue, intervertebral disk and testis. Also expressed in adult testis, kidney, lung, muscle and thymus.

It localises to the nucleus. Functionally, T-box transcription factor that plays an essential role in the determination of the fate of axial stem cells: neural vs mesodermal. Acts in part by down-regulating, a specific enhancer (N1) of SOX2, to inhibit neural development. Seems to play also an essential role in left/right axis determination and acts through effects on Notch signaling around the node as well as through an effect on the morphology and motility of the nodal cilia. The chain is T-box transcription factor TBX6 (TBX6) from Homo sapiens (Human).